Reading from the N-terminus, the 220-residue chain is MSDDILFVSNGNGKAIFLTSRAVLVKSFCSLSKTCSFKDSCQSCEIVDAAKSYLMGKKSDLNVKSLDGELSAGIGEYKIGKNVLLKVMGLGSCIGVILSDVSTGICGIAHVLLPGASNSGEAKYAETAIENMFEDMIRMGARKNRITAKFAGGAQVFKHMSLDILKIGDRNAISVEETLVKRNIPILAKDVGGEVGRNVIFNPVDGSMIVKYTKGEVLWL.

The protein belongs to the CheD family.

The catalysed reaction is L-glutaminyl-[protein] + H2O = L-glutamyl-[protein] + NH4(+). In terms of biological role, probably deamidates glutamine residues to glutamate on methyl-accepting chemotaxis receptors (MCPs), playing an important role in chemotaxis. This is Probable chemoreceptor glutamine deamidase CheD 2 from Methanosarcina acetivorans (strain ATCC 35395 / DSM 2834 / JCM 12185 / C2A).